A 472-amino-acid chain; its full sequence is MVTINTESALTPRSLRDTRRMNMFVSVAAAVAGLLFGLDIGVIAGALPFITDHFVLTSRLQEWVVSSMMLGAAIGALFNGWLSFRLGRKYSLMAGAILFVLGSIGSAFATSVEMLIAARVVLGIAVGIASYTAPLYLSEMASENVRGKMISMYQLMVTLGIVLAFLSDTAFSYSGNWRAMLGVLALPAVLLIILVVFLPNSPRWLAEKGRHIEAEEVLRMLRDTSEKAREELNEIRESLKLKQGGWALFKINRNVRRAVFLGMLLQAMQQFTGMNIIMYYAPRIFKMAGFTTTEQQMIATLVVGLTFMFATFIAVFTVDKAGRKPALKIGFSVMALGTLVLGYCLMQFDNGTASSGLSWLSVGMTMMCIAGYAMSAAPVVWILCSEIQPLKCRDFGITCSTTTNWVSNMIIGATFLTLLDSIGAAGTFWLYTALNIAFVGITFWLIPETKNVTLEHIERKLMAGEKLRNIGV.

Residues 1–29 (MVTINTESALTPRSLRDTRRMNMFVSVAA) are Cytoplasmic-facing. A helical transmembrane segment spans residues 30-50 (AVAGLLFGLDIGVIAGALPFI). The Periplasmic portion of the chain corresponds to 51-63 (TDHFVLTSRLQEW). A helical membrane pass occupies residues 64-84 (VVSSMMLGAAIGALFNGWLSF). Over 85–91 (RLGRKYS) the chain is Cytoplasmic. A helical transmembrane segment spans residues 92–112 (LMAGAILFVLGSIGSAFATSV). The Periplasmic portion of the chain corresponds to 113–114 (EM). Residues 115–135 (LIAARVVLGIAVGIASYTAPL) form a helical membrane-spanning segment. At 136 to 154 (YLSEMASENVRGKMISMYQ) the chain is on the cytoplasmic side. Residues 155–175 (LMVTLGIVLAFLSDTAFSYSG) form a helical membrane-spanning segment. Residues 176–178 (NWR) lie on the Periplasmic side of the membrane. A helical transmembrane segment spans residues 179-199 (AMLGVLALPAVLLIILVVFLP). Residues 200–257 (NSPRWLAEKGRHIEAEEVLRMLRDTSEKAREELNEIRESLKLKQGGWALFKINRNVRR) lie on the Cytoplasmic side of the membrane. The helical transmembrane segment at 258–278 (AVFLGMLLQAMQQFTGMNIIM) threads the bilayer. Over 279 to 297 (YYAPRIFKMAGFTTTEQQM) the chain is Periplasmic. A helical membrane pass occupies residues 298–318 (IATLVVGLTFMFATFIAVFTV). Residues 319–325 (DKAGRKP) lie on the Cytoplasmic side of the membrane. The chain crosses the membrane as a helical span at residues 326–346 (ALKIGFSVMALGTLVLGYCLM). The Periplasmic segment spans residues 347–361 (QFDNGTASSGLSWLS). Residues 362–382 (VGMTMMCIAGYAMSAAPVVWI) form a helical membrane-spanning segment. Topologically, residues 383-404 (LCSEIQPLKCRDFGITCSTTTN) are cytoplasmic. 2 helical membrane-spanning segments follow: residues 405–425 (WVSN…IGAA) and 426–446 (GTFW…FWLI). Residues 447–472 (PETKNVTLEHIERKLMAGEKLRNIGV) lie on the Cytoplasmic side of the membrane.

The protein belongs to the major facilitator superfamily. Sugar transporter (TC 2.A.1.1) family.

The protein localises to the cell inner membrane. It carries out the reaction L-arabinose(in) + H(+)(in) = L-arabinose(out) + H(+)(out). In terms of biological role, uptake of L-arabinose across the cytoplasmic membrane with the concomitant transport of protons into the cell (symport system). This Escherichia coli O157:H7 protein is Arabinose-proton symporter (araE).